The sequence spans 255 residues: Putative esterase YitV (255 aa).

This chain is Putative esterase YitV (yitV), found in Bacillus subtilis (strain 168).